Here is a 544-residue protein sequence, read N- to C-terminus: MFS-type transporter prx5 (544 aa).

Positions Met-1–Glu-28 are disordered. 13 helical membrane passes run Trp-36–Val-56, Leu-90–Ala-110, Val-116–Ala-136, Ile-148–Ala-168, Ala-178–Leu-198, Gly-221–Val-241, Val-249–Phe-269, Phe-290–Leu-310, Val-330–Phe-350, Leu-361–Thr-381, Ile-387–Ile-407, Gly-418–Ile-438, and Ala-505–Leu-525.

The protein belongs to the major facilitator superfamily.

The protein localises to the cell membrane. MFS-type transporter; part of the gene cluster that mediates the biosynthesis of PR-toxin, a bicyclic sesquiterpene belonging to the eremophilane class and acting as a mycotoxin. The protein is MFS-type transporter prx5 of Penicillium rubens (strain ATCC 28089 / DSM 1075 / NRRL 1951 / Wisconsin 54-1255) (Penicillium chrysogenum).